A 648-amino-acid polypeptide reads, in one-letter code: Golgin subfamily A member 8G (648 aa).

Residues 1–11 are compositionally biased toward pro residues; that stretch reads MWPQARLPPHP. Disordered stretches follow at residues 1-84 and 119-139; these read MWPQ…SATL and NKQVEHQLEEEKKANNEKQKA. The segment covering 50–62 has biased composition (polar residues); the sequence is TNGSIHETATSGG. Coiled coils occupy residues 105–160, 223–275, and 318–424; these read VSQL…LNTD, LEQS…MSQE, and EVEL…QQKQ. Residues 121–139 show a composition bias toward basic and acidic residues; the sequence is QVEHQLEEEKKANNEKQKA. Disordered regions lie at residues 356-376, 434-461, 508-549, and 600-624; these read LREQEERLQEQQERLPEQEER, ALPGEGDGGGHLDSEGEEAPRPIPSIPQ, PITK…GVAA, and PVQGEAREGSPHDNPTAQPIVQDHQ. Over residues 441 to 453 the composition is skewed to basic and acidic residues; it reads GGGHLDSEGEEAP. Residues 521-534 are compositionally biased toward gly residues; that stretch reads PGGGHHQAGPGQGG.

The protein belongs to the GOLGA8 family.

This Homo sapiens (Human) protein is Golgin subfamily A member 8G.